We begin with the raw amino-acid sequence, 177 residues long: Adenine phosphoribosyltransferase (177 aa).

It belongs to the purine/pyrimidine phosphoribosyltransferase family. Homodimer.

It is found in the cytoplasm. The catalysed reaction is AMP + diphosphate = 5-phospho-alpha-D-ribose 1-diphosphate + adenine. Its pathway is purine metabolism; AMP biosynthesis via salvage pathway; AMP from adenine: step 1/1. Functionally, catalyzes a salvage reaction resulting in the formation of AMP, that is energically less costly than de novo synthesis. This is Adenine phosphoribosyltransferase from Chlorobium phaeobacteroides (strain BS1).